We begin with the raw amino-acid sequence, 772 residues long: Phosphoribosylformylglycinamidine synthase subunit PurL (772 aa).

Residue H62 is part of the active site. Y65 and K109 together coordinate ATP. E111 provides a ligand contact to Mg(2+). Residues 112–115 (SHNH) and R134 each bind substrate. H113 serves as the catalytic Proton acceptor. Residue D135 coordinates Mg(2+). Substrate is bound at residue Q259. A Mg(2+)-binding site is contributed by D287. Position 331 to 333 (331 to 333 (ESQ)) interacts with substrate. Residues D519 and G556 each contribute to the ATP site. N557 is a binding site for Mg(2+). S559 lines the substrate pocket.

The protein belongs to the FGAMS family. In terms of assembly, monomer. Part of the FGAM synthase complex composed of 1 PurL, 1 PurQ and 2 PurS subunits.

The protein resides in the cytoplasm. It catalyses the reaction N(2)-formyl-N(1)-(5-phospho-beta-D-ribosyl)glycinamide + L-glutamine + ATP + H2O = 2-formamido-N(1)-(5-O-phospho-beta-D-ribosyl)acetamidine + L-glutamate + ADP + phosphate + H(+). It functions in the pathway purine metabolism; IMP biosynthesis via de novo pathway; 5-amino-1-(5-phospho-D-ribosyl)imidazole from N(2)-formyl-N(1)-(5-phospho-D-ribosyl)glycinamide: step 1/2. Part of the phosphoribosylformylglycinamidine synthase complex involved in the purines biosynthetic pathway. Catalyzes the ATP-dependent conversion of formylglycinamide ribonucleotide (FGAR) and glutamine to yield formylglycinamidine ribonucleotide (FGAM) and glutamate. The FGAM synthase complex is composed of three subunits. PurQ produces an ammonia molecule by converting glutamine to glutamate. PurL transfers the ammonia molecule to FGAR to form FGAM in an ATP-dependent manner. PurS interacts with PurQ and PurL and is thought to assist in the transfer of the ammonia molecule from PurQ to PurL. The sequence is that of Phosphoribosylformylglycinamidine synthase subunit PurL from Leifsonia xyli subsp. xyli (strain CTCB07).